A 179-amino-acid chain; its full sequence is Nucleoside-triphosphatase THEP1 (179 aa).

ATP-binding positions include glycine 7–threonine 14 and isoleucine 98–glycine 105.

The protein belongs to the THEP1 NTPase family.

It carries out the reaction a ribonucleoside 5'-triphosphate + H2O = a ribonucleoside 5'-diphosphate + phosphate + H(+). Has nucleotide phosphatase activity towards ATP, GTP, CTP, TTP and UTP. May hydrolyze nucleoside diphosphates with lower efficiency. In Pyrococcus abyssi (strain GE5 / Orsay), this protein is Nucleoside-triphosphatase THEP1.